The sequence spans 219 residues: Probable nicotinate-nucleotide adenylyltransferase (219 aa).

This sequence belongs to the NadD family.

It catalyses the reaction nicotinate beta-D-ribonucleotide + ATP + H(+) = deamido-NAD(+) + diphosphate. The protein operates within cofactor biosynthesis; NAD(+) biosynthesis; deamido-NAD(+) from nicotinate D-ribonucleotide: step 1/1. Functionally, catalyzes the reversible adenylation of nicotinate mononucleotide (NaMN) to nicotinic acid adenine dinucleotide (NaAD). This is Probable nicotinate-nucleotide adenylyltransferase from Hahella chejuensis (strain KCTC 2396).